Reading from the N-terminus, the 782-residue chain is Coiled-coil alpha-helical rod protein 1 (782 aa).

Basic and acidic residues-rich tracts occupy residues 62-74 (ERDV…EPGR) and 208-218 (ETRRAGEAKEL). 2 disordered regions span residues 62 to 82 (ERDV…WGLE) and 191 to 218 (SSLT…AKEL). Coiled-coil stretches lie at residues 82–314 (EGSQ…ELTR), 344–435 (LMVQ…VVNA), and 498–691 (VADV…QQEG).

It localises to the cytoplasm. The protein localises to the nucleus. In terms of biological role, may be a regulator of keratinocyte proliferation or differentiation. The chain is Coiled-coil alpha-helical rod protein 1 (CCHCR1) from Pongo pygmaeus (Bornean orangutan).